Reading from the N-terminus, the 604-residue chain is Complement factor I (604 aa).

The signal sequence occupies residues 1–18 (MKLALLILLLLNPHLSSS). Intrachain disulfides connect Cys36/Cys260, Cys46/Cys57, Cys51/Cys62, Cys64/Cys96, Cys70/Cys89, Cys78/Cys109, Cys144/Cys186, Cys157/Cys219, Cys191/Cys201, Cys234/Cys252, Cys246/Cys261, Cys264/Cys276, Cys271/Cys289, Cys283/Cys298, Cys349/Cys474, Cys387/Cys403, Cys395/Cys465, Cys488/Cys552, Cys516/Cys531, and Cys542/Cys571. A glycan (N-linked (GlcNAc...) asparagine) is linked at Asn40. Positions 58–111 (IEGTCACKLPYQCPKAGTPVCATNGRGYPTYCHLKSFECLHPEIKFSNNGTCTA) constitute a Kazal-like domain. 3 N-linked (GlcNAc...) asparagine glycosylation sites follow: Asn106, Asn116, and Asn182. An SRCR domain is found at 117-217 (VSLIYGSTDT…SKAPHGLAGV (101 aa)). 2 LDL-receptor class A domains span residues 218–262 (VCYT…LCCK) and 263–299 (GCRG…SGCE). Lys244, Asp247, Val249, Asp251, Asp257, and Glu258 together coordinate Ca(2+). Residues Asn284, Glu286, Asp288, Asp294, and Glu295 each coordinate Ca(2+). The Peptidase S1 domain occupies 362 to 595 (VVGGKPAEMG…YFDWISYYVG (234 aa)). Catalysis depends on charge relay system residues His402 and Asp450. Residue Asn515 is glycosylated (N-linked (GlcNAc...) asparagine). The active-site Charge relay system is the Ser546. The N-linked (GlcNAc...) asparagine glycan is linked to Asn557.

It belongs to the peptidase S1 family. In terms of assembly, heterodimer of a light and heavy chains; disulfide-linked. The fully processed and mature protein circulates as a zymogen, and is allosterically activated by substrate-induced remodeling of the active site. Interacts with C3b. Interacts with complement factor H. In terms of tissue distribution, expressed in the liver by hepatocytes. Also present in other cells such as monocytes, fibroblasts or keratinocytes.

Its subcellular location is the secreted. The protein localises to the extracellular space. The catalysed reaction is Inactivates complement subcomponents C3b, iC3b and C4b by proteolytic cleavage.. In terms of biological role, trypsin-like serine protease that plays an essential role in regulating the immune response by controlling all complement pathways. Inhibits these pathways by cleaving three peptide bonds in the alpha-chain of C3b and two bonds in the alpha-chain of C4b thereby inactivating these proteins. Essential cofactors for these reactions include factor H and C4BP in the fluid phase and membrane cofactor protein/CD46 and CR1 on cell surfaces. The presence of these cofactors on healthy cells allows degradation of deposited C3b by CFI in order to prevent undesired complement activation, while in apoptotic cells or microbes, the absence of such cofactors leads to C3b-mediated complement activation and subsequent opsonization. The sequence is that of Complement factor I (Cfi) from Rattus norvegicus (Rat).